A 318-amino-acid chain; its full sequence is Protein OPG137 (318 aa).

Residues Val-145–Ser-172 adopt a coiled-coil conformation.

This sequence belongs to the orthopoxvirus OPG137 family. Homomultimer. Interacts with OPG160. In terms of processing, phosphorylated by a OPG054-independent mechanism.

The protein resides in the host cytoplasm. Required for viral crescent formation early during virus morphogenesis. The polypeptide is Protein OPG137 (OPG137) (Vaccinia virus (strain Ankara) (VACV)).